The chain runs to 381 residues: V-type proton ATPase subunit C 1-B (381 aa).

Threonine 2 is subject to N-acetylthreonine.

It belongs to the V-ATPase C subunit family. As to quaternary structure, V-ATPase is a heteromultimeric enzyme made up of two complexes: the ATP-hydrolytic V1 complex and the proton translocation V0 complex. The V1 complex consists of three catalytic AB heterodimers that form a heterohexamer, three peripheral stalks each consisting of EG heterodimers, one central rotor including subunits D and F, and the regulatory subunits C and H. The proton translocation complex V0 consists of the proton transport subunit a, a ring of proteolipid subunits c9c'', rotary subunit d, subunits e and f, and two accessory subunits.

Subunit of the V1 complex of vacuolar(H+)-ATPase (V-ATPase), a multisubunit enzyme composed of a peripheral complex (V1) that hydrolyzes ATP and a membrane integral complex (V0) that translocates protons. V-ATPase is responsible for acidifying and maintaining the pH of intracellular compartments and in some cell types, is targeted to the plasma membrane, where it is responsible for acidifying the extracellular environment. Subunit C is necessary for the assembly of the catalytic sector of the enzyme and is likely to have a specific function in its catalytic activity. The protein is V-type proton ATPase subunit C 1-B (atp6v1c1b) of Danio rerio (Zebrafish).